A 72-amino-acid chain; its full sequence is Disintegrin batroxostatin (72 aa).

A Disintegrin domain is found at 1-72 (EAGEECDCGA…SADCPRNRFY (72 aa)). 6 disulfide bridges follow: Cys6–Cys21, Cys8–Cys16, Cys15–Cys38, Cys29–Cys35, Cys34–Cys59, and Cys47–Cys66. The Cell attachment site motif lies at 51 to 53 (RGD). A disordered region spans residues 52–72 (GDNPDDRCTGQSADCPRNRFY).

Belongs to the venom metalloproteinase (M12B) family. P-II subfamily. P-IIa sub-subfamily. Monomer. As to expression, expressed by the venom gland.

The protein resides in the secreted. Inhibits fibrinogen interaction with platelets. Acts by binding to the glycoprotein IIb-IIIa receptor (ITGA2B/ITGB3) on the platelet surface and inhibits aggregation induced by ADP, thrombin, platelet-activating factor and collagen. Also inhibits T24 and SK-Mel-28 cell adhesion to fibronectin with IC(50) of 4.4 uM and 33 nM, respectively. This Bothrops atrox (Barba amarilla) protein is Disintegrin batroxostatin.